A 443-amino-acid polypeptide reads, in one-letter code: Trigger factor (443 aa).

Residues 161–246 form the PPIase FKBP-type domain; the sequence is ADGVTITYHG…VISVTAPRLP (86 aa).

The protein belongs to the FKBP-type PPIase family. Tig subfamily.

The protein localises to the cytoplasm. It carries out the reaction [protein]-peptidylproline (omega=180) = [protein]-peptidylproline (omega=0). Its function is as follows. Involved in protein export. Acts as a chaperone by maintaining the newly synthesized protein in an open conformation. Functions as a peptidyl-prolyl cis-trans isomerase. The polypeptide is Trigger factor (Nitrosococcus oceani (strain ATCC 19707 / BCRC 17464 / JCM 30415 / NCIMB 11848 / C-107)).